The following is a 334-amino-acid chain: Adenosine deaminase (334 aa).

Positions 12 and 14 each coordinate Zn(2+). Residues His-14, Asp-16, and Gly-170 each coordinate substrate. His-197 is a binding site for Zn(2+). Catalysis depends on Glu-200, which acts as the Proton donor. Asp-278 is a binding site for Zn(2+). Asp-279 provides a ligand contact to substrate.

The protein belongs to the metallo-dependent hydrolases superfamily. Adenosine and AMP deaminases family. Adenosine deaminase subfamily. Zn(2+) is required as a cofactor.

It catalyses the reaction adenosine + H2O + H(+) = inosine + NH4(+). It carries out the reaction 2'-deoxyadenosine + H2O + H(+) = 2'-deoxyinosine + NH4(+). In terms of biological role, catalyzes the hydrolytic deamination of adenosine and 2-deoxyadenosine. This is Adenosine deaminase from Vibrio parahaemolyticus serotype O3:K6 (strain RIMD 2210633).